We begin with the raw amino-acid sequence, 629 residues long: Aspartate--tRNA(Asp/Asn) ligase (629 aa).

The interval 1-24 is disordered; it reads MERSSRADLISEDSHPARTHTCGD. A compositionally biased stretch (basic and acidic residues) spans 12–24; it reads EDSHPARTHTCGD. Glu194 is a binding site for L-aspartate. The interval 218 to 221 is aspartate; the sequence is QTYK. An L-aspartate-binding site is contributed by Arg240. ATP-binding positions include 240–242 and Gln249; that span reads RDE. His474 provides a ligand contact to L-aspartate. Residue Glu508 participates in ATP binding. Arg515 is an L-aspartate binding site. 560–563 lines the ATP pocket; sequence GLDR.

This sequence belongs to the class-II aminoacyl-tRNA synthetase family. Type 1 subfamily. Homodimer.

It is found in the cytoplasm. It carries out the reaction tRNA(Asx) + L-aspartate + ATP = L-aspartyl-tRNA(Asx) + AMP + diphosphate. In terms of biological role, aspartyl-tRNA synthetase with relaxed tRNA specificity since it is able to aspartylate not only its cognate tRNA(Asp) but also tRNA(Asn). Reaction proceeds in two steps: L-aspartate is first activated by ATP to form Asp-AMP and then transferred to the acceptor end of tRNA(Asp/Asn). The polypeptide is Aspartate--tRNA(Asp/Asn) ligase (Salinibacter ruber (strain DSM 13855 / M31)).